Reading from the N-terminus, the 528-residue chain is 4-nitrophenol 4-monooxygenase/4-nitrocatechol 2-monooxygenase, oxygenase component (528 aa).

100–104 (RPPAG) lines the substrate pocket. FAD-binding positions include 153–155 (PMF), 159–162 (QFDR), and Thr194. 205–206 (GN) serves as a coordination point for substrate. 461-464 (TMQR) serves as a coordination point for FAD.

This sequence belongs to the FADH(2)-utilizing monooxygenase family. In terms of assembly, the 4-NP/4-NCA monooxygenase is composed of an oxygenase component NpcA and a reductase component NpcB. Requires FAD as cofactor.

It carries out the reaction 4-nitrophenol + NADH + O2 + H(+) = 4-nitrocatechol + NAD(+) + H2O. It catalyses the reaction 4-nitrocatechol + NADPH + O2 = 2-hydroxy-1,4-benzoquinone + nitrite + NADP(+) + H2O. The enzyme catalyses 4-nitrocatechol + NADH + O2 = 2-hydroxy-1,4-benzoquinone + nitrite + NAD(+) + H2O. It functions in the pathway aromatic compound metabolism. Its pathway is xenobiotic degradation. Its activity is regulated as follows. Inhibited by methimazole. Functionally, involved in the degradation of para-nitrophenol (4-NP). Catalyzes both the initial hydroxylation of 4-NP to produce 4-nitrocatechol (4-NCA) and the subsequent oxidative release of the nitro group from 4-NCA to produce 2-hydroxy-1,4-benzoquinone. It can also use 4-nitroresorcinol as substrate with a rate of nitrite release similar to that observed with the two physiological substrates, 4-PN and 4-NCA. This Rhodococcus opacus (Nocardia opaca) protein is 4-nitrophenol 4-monooxygenase/4-nitrocatechol 2-monooxygenase, oxygenase component (npcA).